A 474-amino-acid polypeptide reads, in one-letter code: tRNA-2-methylthio-N(6)-dimethylallyladenosine synthase (474 aa).

Residues 3 to 120 (KKLLIKTWGC…LPEMIKQSQS (118 aa)) enclose the MTTase N-terminal domain. [4Fe-4S] cluster-binding residues include Cys-12, Cys-49, Cys-83, Cys-157, Cys-161, and Cys-164. The Radical SAM core domain occupies 143-375 (RAEGATAFVS…QQQINAQAMR (233 aa)). The region spanning 378–441 (RLMLGTEQRV…ANSLRGEIVR (64 aa)) is the TRAM domain.

The protein belongs to the methylthiotransferase family. MiaB subfamily. In terms of assembly, monomer. Requires [4Fe-4S] cluster as cofactor.

It is found in the cytoplasm. The enzyme catalyses N(6)-dimethylallyladenosine(37) in tRNA + (sulfur carrier)-SH + AH2 + 2 S-adenosyl-L-methionine = 2-methylsulfanyl-N(6)-dimethylallyladenosine(37) in tRNA + (sulfur carrier)-H + 5'-deoxyadenosine + L-methionine + A + S-adenosyl-L-homocysteine + 2 H(+). In terms of biological role, catalyzes the methylthiolation of N6-(dimethylallyl)adenosine (i(6)A), leading to the formation of 2-methylthio-N6-(dimethylallyl)adenosine (ms(2)i(6)A) at position 37 in tRNAs that read codons beginning with uridine. The polypeptide is tRNA-2-methylthio-N(6)-dimethylallyladenosine synthase (Vibrio vulnificus (strain YJ016)).